The following is an 84-amino-acid chain: Magnetosome protein MamG (84 aa).

Over 1-3 (MIK) the chain is Cytoplasmic. The helical transmembrane segment at 4-24 (GIAGVGGTALGVGGGVAAPPV) threads the bilayer. Residues 25-40 (SAAAVGSTLLAGKGVC) lie on the Lumenal side of the membrane. Positions 41-48 (LGLGLGLG) are LG repeat. A helical transmembrane segment spans residues 41–61 (LGLGLGLGAWGPVLLGVAGLA). At 62–84 (CAASLCDYLKNRKAQAEASAEPA) the chain is on the cytoplasmic side.

It belongs to the magnetosome MamG (TC 9.B.95) protein family.

It is found in the magnetosome membrane. Plays a role in regulating magnetite crystal size. The protein is Magnetosome protein MamG of Magnetospirillum gryphiswaldense (strain DSM 6361 / JCM 21280 / NBRC 15271 / MSR-1).